Here is a 453-residue protein sequence, read N- to C-terminus: UPF0210 protein Mbar_A3181 (453 aa).

This sequence belongs to the UPF0210 family.

The protein is UPF0210 protein Mbar_A3181 of Methanosarcina barkeri (strain Fusaro / DSM 804).